We begin with the raw amino-acid sequence, 402 residues long: Putative cytochrome P450 123 (402 aa).

Residue Cys-350 participates in heme binding.

This sequence belongs to the cytochrome P450 family. The cofactor is heme.

The sequence is that of Putative cytochrome P450 123 (cyp123) from Mycobacterium bovis (strain ATCC BAA-935 / AF2122/97).